Here is a 145-residue protein sequence, read N- to C-terminus: Large ribosomal subunit protein uL13 (145 aa).

Belongs to the universal ribosomal protein uL13 family. In terms of assembly, part of the 50S ribosomal subunit.

This protein is one of the early assembly proteins of the 50S ribosomal subunit, although it is not seen to bind rRNA by itself. It is important during the early stages of 50S assembly. This Listeria innocua serovar 6a (strain ATCC BAA-680 / CLIP 11262) protein is Large ribosomal subunit protein uL13.